Consider the following 295-residue polypeptide: MGVRKLKPVTNGTRHAVLYDFEEIEKLVRKGKELVLVKKNKVEPEKSLLKWWHRAKGRSRQRGNITARHRGGGHKKLYRIIDFERDKSLVPAKVVSIEYDPFRSARICLLHYADGEKRYIIWPEGLKVGDTVMSISWEDAEAGKPLPEIKPGNAMPLKYIPEGTIIHNIEFMPGKGGQIARAAGTWAQVLGRSTKKGYVLVRMPSGEVRMIHERCMATIGRVGLAEHELVNVGKAGRARWLGWRPHTRGTAMNPVDHPHGGGEGRTRGKHPESPWDGRRRDTRREGVRSTPISLS.

The disordered stretch occupies residues 243-295 (WRPHTRGTAMNPVDHPHGGGEGRTRGKHPESPWDGRRRDTRREGVRSTPISLS). The span at 256–287 (DHPHGGGEGRTRGKHPESPWDGRRRDTRREGV) shows a compositional bias: basic and acidic residues.

The protein belongs to the universal ribosomal protein uL2 family. As to quaternary structure, part of the 50S ribosomal subunit. Forms a bridge to the 30S subunit in the 70S ribosome.

In terms of biological role, one of the primary rRNA binding proteins. Required for association of the 30S and 50S subunits to form the 70S ribosome, for tRNA binding and peptide bond formation. It has been suggested to have peptidyltransferase activity; this is somewhat controversial. Makes several contacts with the 16S rRNA in the 70S ribosome. This Aquifex pyrophilus protein is Large ribosomal subunit protein uL2.